A 329-amino-acid polypeptide reads, in one-letter code: DNA-directed RNA polymerase subunit alpha (329 aa).

Residues 1–234 (MQGSVTEFLK…EQLDAFVELR (234 aa)) form an alpha N-terminal domain (alpha-NTD) region. Residues 248-329 (FDPILLRPVD…WPPASLADDL (82 aa)) are alpha C-terminal domain (alpha-CTD).

Belongs to the RNA polymerase alpha chain family. In terms of assembly, homodimer. The RNAP catalytic core consists of 2 alpha, 1 beta, 1 beta' and 1 omega subunit. When a sigma factor is associated with the core the holoenzyme is formed, which can initiate transcription.

The catalysed reaction is RNA(n) + a ribonucleoside 5'-triphosphate = RNA(n+1) + diphosphate. In terms of biological role, DNA-dependent RNA polymerase catalyzes the transcription of DNA into RNA using the four ribonucleoside triphosphates as substrates. In Shewanella loihica (strain ATCC BAA-1088 / PV-4), this protein is DNA-directed RNA polymerase subunit alpha.